A 339-amino-acid polypeptide reads, in one-letter code: Dihydroorotase (339 aa).

Zn(2+) contacts are provided by His-12 and His-14. Substrate-binding positions include 14-16 (HVR) and Asn-40. The Zn(2+) site is built by Lys-94, His-133, His-167, and Asp-239. N6-carboxylysine is present on Lys-94. Residue His-133 participates in substrate binding. Residue Asp-239 is part of the active site. His-243 and Ala-255 together coordinate substrate.

This sequence belongs to the metallo-dependent hydrolases superfamily. DHOase family. Class II DHOase subfamily. In terms of assembly, homodimer. Zn(2+) serves as cofactor.

It catalyses the reaction (S)-dihydroorotate + H2O = N-carbamoyl-L-aspartate + H(+). It participates in pyrimidine metabolism; UMP biosynthesis via de novo pathway; (S)-dihydroorotate from bicarbonate: step 3/3. In terms of biological role, catalyzes the reversible cyclization of carbamoyl aspartate to dihydroorotate. In Helicobacter pylori (strain G27), this protein is Dihydroorotase.